The sequence spans 269 residues: Thiazole synthase (269 aa).

K105 acts as the Schiff-base intermediate with DXP in catalysis. 1-deoxy-D-xylulose 5-phosphate contacts are provided by residues G166, 192–193, and 214–215; these read AG and NT. The interval 245–269 is disordered; it reads AMSAQDAAQPSTPVLGTPFWHHDHG.

This sequence belongs to the ThiG family. Homotetramer. Forms heterodimers with either ThiH or ThiS.

It localises to the cytoplasm. It carries out the reaction [ThiS sulfur-carrier protein]-C-terminal-Gly-aminoethanethioate + 2-iminoacetate + 1-deoxy-D-xylulose 5-phosphate = [ThiS sulfur-carrier protein]-C-terminal Gly-Gly + 2-[(2R,5Z)-2-carboxy-4-methylthiazol-5(2H)-ylidene]ethyl phosphate + 2 H2O + H(+). It functions in the pathway cofactor biosynthesis; thiamine diphosphate biosynthesis. In terms of biological role, catalyzes the rearrangement of 1-deoxy-D-xylulose 5-phosphate (DXP) to produce the thiazole phosphate moiety of thiamine. Sulfur is provided by the thiocarboxylate moiety of the carrier protein ThiS. In vitro, sulfur can be provided by H(2)S. This chain is Thiazole synthase, found in Paracidovorax citrulli (strain AAC00-1) (Acidovorax citrulli).